A 347-amino-acid polypeptide reads, in one-letter code: MVNVDTKLLVIFVELLSKRNATYVAEKMHMTAPAVSHSLGRLREIFDDPLFIRVPHGLTPTPKALELGPKVREMLDLWAAINEGDIATFDPLEAAGTFNISFAGTLGDALFDRFLLRVKRLAPGLQVRLTESSSWEADVAAMRSNELDLAFSPFPTRHPEIVEEVVTSFNMWVCARKDHPVLKDHCSLDQYLECEHIFIAQGNPGTRAAPSLIPLDYALQQRGLKRHSTMTVHAWRTQAEVAAQTDMIFTVNSLMKDLVCETYNLNAFPLPSELETVLGLNMLWHRSRNTHPMLVWARNLFKQVVAEYTGKASIAPMHPPMLTDDSGKSGKTGKGDAEKEDESRLSV.

The 61-residue stretch at Met-1 to Thr-61 folds into the HTH lysR-type domain. Residues Ala-21–Gly-40 constitute a DNA-binding region (H-T-H motif). The segment at Pro-316 to Val-347 is disordered. Over residues Asp-325–Val-347 the composition is skewed to basic and acidic residues.

This sequence belongs to the LysR transcriptional regulatory family.

Regulates the transcription of one or more of the genes involved in virulence. In Ralstonia nicotianae (strain ATCC BAA-1114 / GMI1000) (Ralstonia solanacearum), this protein is HTH-type transcriptional regulator PhcA (phcA).